The sequence spans 84 residues: Toxin Ts4 (84 aa).

Positions 1–19 (MKRMILFISCLLLIDIVVG) are cleaved as a signal peptide. The LCN-type CS-alpha/beta domain maps to 21-82 (REGYPADSKG…IWTSETNKCG (62 aa)). 4 disulfide bridges follow: Cys-31–Cys-81, Cys-35–Cys-57, Cys-43–Cys-62, and Cys-47–Cys-64. Cysteine amide is present on Cys-81. A propeptide spanning residues 82–84 (GKK) is cleaved from the precursor.

Belongs to the long (4 C-C) scorpion toxin superfamily. Sodium channel inhibitor family. Alpha subfamily. Expressed by the venom gland.

The protein resides in the secreted. Its function is as follows. Not toxic. Induces an immune response similar to that induced by whole venom. Induces a dose dependent release of the neurotransmitters glutamic acid and gamma aminobutyric acid from rat brain synaptosomes. Thus, polyclonal antibodies raised against this protein can neutralize the effects of the venom. The chain is Toxin Ts4 from Tityus serrulatus (Brazilian scorpion).